The primary structure comprises 119 residues: Protein TusC (119 aa).

This sequence belongs to the DsrF/TusC family. As to quaternary structure, heterohexamer, formed by a dimer of trimers. The hexameric TusBCD complex contains 2 copies each of TusB, TusC and TusD. The TusBCD complex interacts with TusE.

It localises to the cytoplasm. Its function is as follows. Part of a sulfur-relay system required for 2-thiolation of 5-methylaminomethyl-2-thiouridine (mnm(5)s(2)U) at tRNA wobble positions. The sequence is that of Protein TusC from Escherichia coli O127:H6 (strain E2348/69 / EPEC).